The sequence spans 122 residues: uncharacterized protein (122 aa).

The helical transmembrane segment at 9 to 25 threads the bilayer; it reads AFPSPVFLGGVFFVFFF.

The protein resides in the cytoplasm. Its subcellular location is the nucleus. The protein localises to the membrane. This is an uncharacterized protein from Saccharomyces cerevisiae (strain ATCC 204508 / S288c) (Baker's yeast).